The sequence spans 466 residues: Cysteine--tRNA ligase (466 aa).

Residue Cys29 coordinates Zn(2+). A 'HIGH' region motif is present at residues 31–41; the sequence is ATVQAAPHIGH. Residues Cys208, His233, and Glu237 each contribute to the Zn(2+) site. A 'KMSKS' region motif is present at residues 264–268; sequence KMSKS. Residue Lys267 coordinates ATP.

It belongs to the class-I aminoacyl-tRNA synthetase family. As to quaternary structure, monomer. Zn(2+) serves as cofactor.

Its subcellular location is the cytoplasm. The catalysed reaction is tRNA(Cys) + L-cysteine + ATP = L-cysteinyl-tRNA(Cys) + AMP + diphosphate. This is Cysteine--tRNA ligase from Streptomyces avermitilis (strain ATCC 31267 / DSM 46492 / JCM 5070 / NBRC 14893 / NCIMB 12804 / NRRL 8165 / MA-4680).